A 444-amino-acid polypeptide reads, in one-letter code: MSGTKLEDSPPCRNWSSAPELNETQEPFLNPTDYDDEEFLRYLWREYLHPKEYEWVLIAGYIIVFVVALVGNVLVCVAVWKNHHMRTVTNYFIVNLSLADVLVTITCLPATLVVDITETWFFGQSLCKVIPYLQTVSVSVSVLTLSCIALDRWYAICHPLMFKSTAKRARNSIVIIWIVSCIIMIPQAIVMECSTMLPGLANKTTLFTVCDERWGGEIYPKMYHICFFLVTYMAPLCLMVLAYLQIFRKLWCRQIPGTSSVVQRKWKPLQPASQPRGPGQQTKSRISAVAAEIKQIRARRKTARMLMVVLLVFAICYLPISILNVLKRVFGMFTHTEDRETVYAWFTFSHWLVYANSAANPIIYNFLSGKFREEFKAAFSCCCLGVHHRQEDRLTRGRTSTESRKSLTTQISNFDNVSKLSEQVVLTSISTLPAANGAGPLQNW.

The span at 1–10 (MSGTKLEDSP) shows a compositional bias: basic and acidic residues. The interval 1–30 (MSGTKLEDSPPCRNWSSAPELNETQEPFLN) is disordered. Over 1–54 (MSGTKLEDSPPCRNWSSAPELNETQEPFLNPTDYDDEEFLRYLWREYLHPKEYE) the chain is Extracellular. 2 N-linked (GlcNAc...) asparagine glycosylation sites follow: asparagine 14 and asparagine 22. Positions 14–27 (NWSSAPELNETQEP) are enriched in polar residues. The interval 33-49 (DYDDEEFLRYLWREYLH) is required for response to orexin-A. Residues 55 to 75 (WVLIAGYIIVFVVALVGNVLV) traverse the membrane as a helical segment. The Cytoplasmic portion of the chain corresponds to 76-88 (CVAVWKNHHMRTV). The helical transmembrane segment at 89 to 110 (TNYFIVNLSLADVLVTITCLPA) threads the bilayer. Residues 111–127 (TLVVDITETWFFGQSLC) lie on the Extracellular side of the membrane. Cysteine 127 and cysteine 210 are joined by a disulfide. A helical transmembrane segment spans residues 128–150 (KVIPYLQTVSVSVSVLTLSCIAL). Residues 151 to 170 (DRWYAICHPLMFKSTAKRAR) lie on the Cytoplasmic side of the membrane. Residues 171–191 (NSIVIIWIVSCIIMIPQAIVM) form a helical membrane-spanning segment. Residues 192–222 (ECSTMLPGLANKTTLFTVCDERWGGEIYPKM) are Extracellular-facing. N-linked (GlcNAc...) asparagine glycosylation is present at asparagine 202. Residues 223-243 (YHICFFLVTYMAPLCLMVLAY) form a helical membrane-spanning segment. The Cytoplasmic portion of the chain corresponds to 244 to 304 (LQIFRKLWCR…QIRARRKTAR (61 aa)). A helical transmembrane segment spans residues 305 to 326 (MLMVVLLVFAICYLPISILNVL). The Extracellular portion of the chain corresponds to 327–342 (KRVFGMFTHTEDRETV). Residues 343 to 366 (YAWFTFSHWLVYANSAANPIIYNF) form a helical membrane-spanning segment. Residues 367 to 444 (LSGKFREEFK…ANGAGPLQNW (78 aa)) lie on the Cytoplasmic side of the membrane.

Belongs to the G-protein coupled receptor 1 family.

Its subcellular location is the cell membrane. In terms of biological role, nonselective, high-affinity receptor for both orexin-A and orexin-B neuropeptides. Triggers an increase in cytoplasmic Ca(2+) levels in response to orexin-A binding. The chain is Orexin receptor type 2 (HCRTR2) from Canis lupus familiaris (Dog).